The primary structure comprises 163 residues: Ribosome maturation factor RimP (163 aa).

It belongs to the RimP family.

It localises to the cytoplasm. Functionally, required for maturation of 30S ribosomal subunits. The polypeptide is Ribosome maturation factor RimP (Bordetella petrii (strain ATCC BAA-461 / DSM 12804 / CCUG 43448)).